The sequence spans 231 residues: Large ribosomal subunit protein uL1 (231 aa).

Belongs to the universal ribosomal protein uL1 family. Part of the 50S ribosomal subunit.

Functionally, binds directly to 23S rRNA. The L1 stalk is quite mobile in the ribosome, and is involved in E site tRNA release. Protein L1 is also a translational repressor protein, it controls the translation of the L11 operon by binding to its mRNA. This is Large ribosomal subunit protein uL1 from Pseudomonas aeruginosa (strain LESB58).